The sequence spans 909 residues: Translation initiation factor IF-2 (909 aa).

Residues 49 to 314 (LNREQGGSAG…GKQRKTSTLQ (266 aa)) form a disordered region. Composition is skewed to basic and acidic residues over residues 99 to 177 (DAVE…EHKQ), 186 to 236 (IQSE…KWSS), and 255 to 270 (RAAE…GDRR). Residues 271-285 (ARGRSGKATRQKKNN) show a composition bias toward basic residues. The segment covering 286-299 (KHSESKADREEARA) has biased composition (basic and acidic residues). A tr-type G domain is found at 408-577 (PRAPVVTIMG…LLQAEVLELK (170 aa)). A G1 region spans residues 417–424 (GHVDHGKT). GTP is bound at residue 417–424 (GHVDHGKT). The tract at residues 442–446 (GITQH) is G2. The tract at residues 463 to 466 (DTPG) is G3. GTP-binding positions include 463–467 (DTPGH) and 517–520 (NKID). The G4 stretch occupies residues 517 to 520 (NKID). The tract at residues 553–555 (SAK) is G5.

The protein belongs to the TRAFAC class translation factor GTPase superfamily. Classic translation factor GTPase family. IF-2 subfamily.

It localises to the cytoplasm. Functionally, one of the essential components for the initiation of protein synthesis. Protects formylmethionyl-tRNA from spontaneous hydrolysis and promotes its binding to the 30S ribosomal subunits. Also involved in the hydrolysis of GTP during the formation of the 70S ribosomal complex. This Photorhabdus laumondii subsp. laumondii (strain DSM 15139 / CIP 105565 / TT01) (Photorhabdus luminescens subsp. laumondii) protein is Translation initiation factor IF-2.